Consider the following 341-residue polypeptide: Glycerol-3-phosphate dehydrogenase [NAD(P)+] (341 aa).

4 residues coordinate NADPH: S14, F15, R35, and K108. Residues K108 and G136 each contribute to the sn-glycerol 3-phosphate site. A140 is an NADPH binding site. The sn-glycerol 3-phosphate site is built by K191, D244, S254, R255, and N256. Residue K191 is the Proton acceptor of the active site. An NADPH-binding site is contributed by R255. NADPH contacts are provided by V279 and E281.

Belongs to the NAD-dependent glycerol-3-phosphate dehydrogenase family.

The protein localises to the cytoplasm. It catalyses the reaction sn-glycerol 3-phosphate + NAD(+) = dihydroxyacetone phosphate + NADH + H(+). The enzyme catalyses sn-glycerol 3-phosphate + NADP(+) = dihydroxyacetone phosphate + NADPH + H(+). It functions in the pathway membrane lipid metabolism; glycerophospholipid metabolism. Functionally, catalyzes the reduction of the glycolytic intermediate dihydroxyacetone phosphate (DHAP) to sn-glycerol 3-phosphate (G3P), the key precursor for phospholipid synthesis. In Pseudomonas entomophila (strain L48), this protein is Glycerol-3-phosphate dehydrogenase [NAD(P)+].